The primary structure comprises 295 residues: Ankyrin repeat and SOCS box protein 17 (295 aa).

The stretch at 146 to 176 (SGITPLFYVAQTRQSNIFKILLQYGILEREK) is one ANK repeat. Residues 232 to 295 (LGRHPIISNW…RLQNYLNLEI (64 aa)) form the SOCS box domain.

The protein belongs to the ankyrin SOCS box (ASB) family. In terms of tissue distribution, specifically expressed in testis. Not detected in other tissues tested.

Its pathway is protein modification; protein ubiquitination. Functionally, may be a substrate-recognition component of a SCF-like ECS (Elongin-Cullin-SOCS-box protein) E3 ubiquitin-protein ligase complex which mediates the ubiquitination and subsequent proteasomal degradation of target proteins. The sequence is that of Ankyrin repeat and SOCS box protein 17 (ASB17) from Homo sapiens (Human).